A 201-amino-acid polypeptide reads, in one-letter code: Holliday junction branch migration complex subunit RuvA (201 aa).

Positions 1-63 are domain I; it reads MIAYIKGTLN…EDAQILFGFQ (63 aa). Positions 64–142 are domain II; that stretch reads NRDEKYLFTK…SVFSITDEQQ (79 aa). The interval 143 to 149 is flexible linker; sequence KSSVSNV. Residues 150–201 form a domain III region; the sequence is NNNEVYSEAMEALKALGYTDKEVKQVLPHLKKDNDALSVDEAIRKALALLAK.

Belongs to the RuvA family. Homotetramer. Forms an RuvA(8)-RuvB(12)-Holliday junction (HJ) complex. HJ DNA is sandwiched between 2 RuvA tetramers; dsDNA enters through RuvA and exits via RuvB. An RuvB hexamer assembles on each DNA strand where it exits the tetramer. Each RuvB hexamer is contacted by two RuvA subunits (via domain III) on 2 adjacent RuvB subunits; this complex drives branch migration. In the full resolvosome a probable DNA-RuvA(4)-RuvB(12)-RuvC(2) complex forms which resolves the HJ.

The protein resides in the cytoplasm. Functionally, the RuvA-RuvB-RuvC complex processes Holliday junction (HJ) DNA during genetic recombination and DNA repair, while the RuvA-RuvB complex plays an important role in the rescue of blocked DNA replication forks via replication fork reversal (RFR). RuvA specifically binds to HJ cruciform DNA, conferring on it an open structure. The RuvB hexamer acts as an ATP-dependent pump, pulling dsDNA into and through the RuvAB complex. HJ branch migration allows RuvC to scan DNA until it finds its consensus sequence, where it cleaves and resolves the cruciform DNA. This chain is Holliday junction branch migration complex subunit RuvA, found in Oceanobacillus iheyensis (strain DSM 14371 / CIP 107618 / JCM 11309 / KCTC 3954 / HTE831).